We begin with the raw amino-acid sequence, 517 residues long: Gamma-1-syntrophin (517 aa).

Positions 57-140 (TVTIRRQTVG…EVTLTVSFLK (84 aa)) constitute a PDZ domain. In terms of domain architecture, PH spans 283–390 (QIVYMGWCEA…WERAFQTATF (108 aa)).

It belongs to the syntrophin family. Isoform 1, but not isoform 2, interacts with the dystrophin protein DMD and related proteins DTNA and DTNB. Interacts with DGKZ. As to expression, brain specific. In CNS, it is expressed in the perikaryon and proximal portion of the neuronal processes. Strong expression in the hippocampus, neuron-rich dendate granule cells, and pyramidal cell layers. Highly expressed in neurons of the cerebral cortex. Also expressed in the cerebellar cortex, deep cerebellar nuclei, thalamus, and basal ganglia. No expression in muscle cells.

It is found in the cytoplasm. The protein resides in the cytoskeleton. It localises to the nucleus. In terms of biological role, adapter protein that binds to and probably organizes the subcellular localization of a variety of proteins. May link various receptors to the actin cytoskeleton and the dystrophin glycoprotein complex. May participate in regulating the subcellular location of diacylglycerol kinase-zeta to ensure that diacylglycerol is rapidly inactivated following receptor activation. The protein is Gamma-1-syntrophin (SNTG1) of Homo sapiens (Human).